We begin with the raw amino-acid sequence, 1178 residues long: Mannosyltransferase regulator 4 (1178 aa).

At 1–27 (MLQRISSKLHRRFLSGLLRVKHYPLRR) the chain is on the cytoplasmic side. The chain crosses the membrane as a helical; Signal-anchor for type II membrane protein span at residues 28–48 (ILLPLILLQIIIITFIWSNSP). The Lumenal segment spans residues 49-1178 (QRNGLGRDAD…KKKQEEGHSN (1130 aa)). The DXD signature appears at 519-521 (DFD). Residues 1041 to 1178 (EKKKKEEEEK…KKKQEEGHSN (138 aa)) are disordered. Tandem repeats lie at residues 1042-1049 (KKKKEEEE), 1050-1057 (KKKKEEEE), 1058-1065 (KKKKEEEE), 1066-1073 (KKKKEEEE), 1074-1081 (KKKKEEEE), and 1082-1089 (KKKKEEEE). Residues 1042 to 1174 (KKKKEEEEKK…EEEEKKKQEE (133 aa)) are 17 X 8 AA tandem repeats of K-K-K-K-E-E-E-E. Residues 1090 to 1097 (KKKQEEEE) form a 7; approximate repeat. Residues 1098-1105 (KKKKEEEE) form repeat 8. Residues 1106–1113 (KKKQEEGE) form a 9; approximate repeat. The 10; approximate repeat unit spans residues 1114–1121 (KMKNEDEE). One copy of the 11; approximate repeat lies at 1122-1129 (NKKNEDEE). Repeat unit 12 spans residues 1130 to 1137 (KKKNEEEE). One copy of the 13; approximate repeat lies at 1138-1144 (KKKQEEK). A 14; approximate repeat occupies 1145–1152 (NKKNEDEE). Residues 1153 to 1160 (KKKQEEEE) form a 15; approximate repeat. One copy of the 16; approximate repeat lies at 1161–1168 (KKKNEEEE). The 17; truncated repeat unit spans residues 1169–1174 (KKKQEE).

This sequence belongs to the MNN4 family.

Its subcellular location is the golgi apparatus membrane. In terms of biological role, golgi apparatus protein involved in N-glycan mannosylphosphorylation. While MNN4 seems to have a regulatory role in N-glycan mannosylphosphorylation, a transferase activity of MNN4 can not be ruled out. Mediates mannosylphosphate transfer in both the core and outer chain portions of N-linked oligosaccharides. Has partially redundant function with MNN14. This chain is Mannosyltransferase regulator 4, found in Saccharomyces cerevisiae (strain ATCC 204508 / S288c) (Baker's yeast).